Reading from the N-terminus, the 374-residue chain is Putative glutamate--cysteine ligase 2 (374 aa).

Belongs to the glutamate--cysteine ligase type 2 family. YbdK subfamily.

It carries out the reaction L-cysteine + L-glutamate + ATP = gamma-L-glutamyl-L-cysteine + ADP + phosphate + H(+). Its function is as follows. ATP-dependent carboxylate-amine ligase which exhibits weak glutamate--cysteine ligase activity. The sequence is that of Putative glutamate--cysteine ligase 2 from Paracidovorax citrulli (strain AAC00-1) (Acidovorax citrulli).